Here is a 348-residue protein sequence, read N- to C-terminus: Arginine kinase Oct f 2 (348 aa).

The Phosphagen kinase N-terminal domain occupies methionine 1–lysine 83. A substrate-binding site is contributed by glycine 56 to tyrosine 60. In terms of domain architecture, Phosphagen kinase C-terminal spans methionine 111–serine 347. ATP-binding positions include serine 114–arginine 118 and histidine 177. Glutamate 217 contributes to the substrate binding site. Residue arginine 221 participates in ATP binding. A substrate-binding site is contributed by cysteine 263. Residues arginine 272 to histidine 276 and arginine 300 to glutamate 305 each bind ATP. Glutamate 305 is a substrate binding site.

It belongs to the ATP:guanido phosphotransferase family. As to expression, muscle (at protein level).

It catalyses the reaction L-arginine + ATP = N(omega)-phospho-L-arginine + ADP + H(+). Its function is as follows. Catalyzes the reversible transfer of high energy ATP gamma-phosphate group to L-arginine. The sequence is that of Arginine kinase Oct f 2 from Amphioctopus fangsiao (Ocellated octopus).